A 96-amino-acid chain; its full sequence is Nucleoid-associated protein CT_335 (96 aa).

It belongs to the YbaB/EbfC family. As to quaternary structure, homodimer.

Its subcellular location is the cytoplasm. The protein localises to the nucleoid. Functionally, binds to DNA and alters its conformation. May be involved in regulation of gene expression, nucleoid organization and DNA protection. This Chlamydia trachomatis serovar D (strain ATCC VR-885 / DSM 19411 / UW-3/Cx) protein is Nucleoid-associated protein CT_335.